Reading from the N-terminus, the 1076-residue chain is Enhancer of mRNA-decapping protein 4-like protein pdc1 (1076 aa).

2 stretches are compositionally biased toward low complexity: residues 1-19 and 53-69; these read MNEQ…LPNL and SSLL…SNQS. Disordered regions lie at residues 1–82, 95–127, and 139–204; these read MNEQ…ASHS, GAKP…FNPV, and STGP…AEEQ. Residues 70 to 82 show a composition bias toward polar residues; the sequence is PSNSGPKYYASHS. Over residues 153 to 173 the composition is skewed to polar residues; sequence NDSQDTAFQSSRNMPSDTSVA. Residues 174-184 show a composition bias toward low complexity; sequence SPDYSHSQSSS. The span at 185–195 shows a compositional bias: polar residues; that stretch reads PIANYQESGNS. WD repeat units lie at residues 292–334 and 402–441; these read NSPN…STSE and DTGI…PSTP. Disordered regions lie at residues 666 to 714 and 892 to 934; these read RHST…SPSS and TAPD…PAQG. The segment covering 669–688 has biased composition (polar residues); the sequence is TASPSTVNSGFSTPRSQATG. Ser671 and Ser673 each carry phosphoserine. At Thr674 the chain carries Phosphothreonine. Residues 695–706 show a composition bias toward basic and acidic residues; the sequence is DKGERFETKDKS. The segment at 789–1076 is interaction with dcp2; it reads MQVALKEEIA…ISEISVASSN (288 aa). Position 1075 is a phosphoserine (Ser1075).

The protein belongs to the WD repeat EDC4 family. Interacts with dcp2; via C-terminus.

Its subcellular location is the cytoplasm. The protein resides in the P-body. In terms of biological role, involved in P-body formation. Acts as a functional homolog of human EDC4, which plays a role in mRNA decapping in the process of mRNA degradation. Enhances the decapping activity of dcp2. Together with edc3, acts as a scaffolding protein sufficient for the phase transition of the components of the 5' to 3' mRNA degradation machinery to form P-bodies. Intermolecular interactions between the edc3 Sm domain and at least 10 helical leucine-rich motifs in dcp2 and pdc1 build the core of the interaction network of this spontaneous clustering process. In Schizosaccharomyces pombe (strain 972 / ATCC 24843) (Fission yeast), this protein is Enhancer of mRNA-decapping protein 4-like protein pdc1.